A 615-amino-acid polypeptide reads, in one-letter code: Protein DlpA (615 aa).

Belongs to the isocitrate and isopropylmalate dehydrogenases family. The protein to M.jannaschii MJ0644 in the C-terminal section.

In Legionella pneumophila subsp. pneumophila (strain Philadelphia 1 / ATCC 33152 / DSM 7513), this protein is Protein DlpA (dlpA).